The sequence spans 87 residues: DNA/RNA-binding protein Alba (87 aa).

Lys-9 carries the N6-acetyllysine modification.

It belongs to the histone-like Alba family. In terms of processing, acetylated. Acetylation at Lys-9 decreases DNA-binding affinity.

Its subcellular location is the cytoplasm. It is found in the chromosome. Binds double-stranded DNA tightly but without sequence specificity. Involved in DNA compaction. The sequence is that of DNA/RNA-binding protein Alba from Methanocaldococcus jannaschii (strain ATCC 43067 / DSM 2661 / JAL-1 / JCM 10045 / NBRC 100440) (Methanococcus jannaschii).